We begin with the raw amino-acid sequence, 118 residues long: Large ribosomal subunit protein bL20 (118 aa).

The protein belongs to the bacterial ribosomal protein bL20 family.

Functionally, binds directly to 23S ribosomal RNA and is necessary for the in vitro assembly process of the 50S ribosomal subunit. It is not involved in the protein synthesizing functions of that subunit. This chain is Large ribosomal subunit protein bL20, found in Phenylobacterium zucineum (strain HLK1).